A 128-amino-acid polypeptide reads, in one-letter code: Small ribosomal subunit protein uS11 (128 aa).

Belongs to the universal ribosomal protein uS11 family. Part of the 30S ribosomal subunit. Interacts with proteins S7 and S18. Binds to IF-3.

Functionally, located on the platform of the 30S subunit, it bridges several disparate RNA helices of the 16S rRNA. Forms part of the Shine-Dalgarno cleft in the 70S ribosome. This chain is Small ribosomal subunit protein uS11, found in Phytoplasma australiense.